A 427-amino-acid chain; its full sequence is Tumor necrosis factor receptor superfamily member 16 (427 aa).

A signal peptide spans 1 to 31; it reads MRRAGAACSAMDRLRLLLLLLLLLGVSFGGA. The Extracellular portion of the chain corresponds to 32-254; that stretch reads KETCSTGMYT…VVTRGTADNL (223 aa). TNFR-Cys repeat units follow at residues 34–67, 69–110, 111–149, and 151–191; these read TCST…QTVC, PCLD…DAVC, RCSY…NTVC, and ECPE…DAEC. 12 cysteine pairs are disulfide-bonded: Cys-35-Cys-46, Cys-47-Cys-60, Cys-50-Cys-67, Cys-70-Cys-86, Cys-89-Cys-102, Cys-92-Cys-110, Cys-112-Cys-125, Cys-128-Cys-141, Cys-131-Cys-149, Cys-152-Cys-167, Cys-170-Cys-183, and Cys-173-Cys-191. Asn-63 carries N-linked (GlcNAc...) asparagine glycosylation. The tract at residues 197 to 223 is disordered; the sequence is RWITRSTPPEGSDVTTPSTQEPEAPPE. A compositionally biased stretch (polar residues) spans 200–217; that stretch reads TRSTPPEGSDVTTPSTQE. Residues 255-275 form a helical membrane-spanning segment; the sequence is IPVYCSILAAVVVGLVAYIAF. Residues 276–427 lie on the Cytoplasmic side of the membrane; that stretch reads KRWNSCKQNK…CSESTATSPV (152 aa). Polar residues-rich tracts occupy residues 284–294 and 308–329; these read NKQGANSRPVN and SGIS…TASG. Residues 284–334 form a disordered region; sequence NKQGANSRPVNQTPPPEGEKLHSDSGISVDSQSLHDQQTHTQTASGQALKG. Ser-314 carries the phosphoserine modification. Residues 329–344 are mediates interaction with KIDINS220; the sequence is GQALKGDGNLYSSLPL. The Death domain maps to 356–421; that stretch reads GDTWRHLAGE…DIVESLCSES (66 aa).

Homodimer; disulfide-linked. Heterodimer with SORCS2. The extracellular domains of the heterodimer bind NGF. The cytoplasmic region of the heterodimer binds TRIO. NGF binding mediates dissociation of TRIO from the receptor complex. Interacts with TRAF2, TRAF4, TRAF6, PTPN13 and RANBP9. Interacts through TRAF6 with SQSTM1 which bridges NGFR to NTRK1. Interacts with BEX1. Interacts with BEX3. Interacts with KIDINS220 and NTRK1. Can form a ternary complex with NTRK1 and KIDINS220 and this complex is affected by the expression levels of KIDINS220. An increase in KIDINS220 expression leads to a decreased association of NGFR and NTRK1. Interacts (via death domain) with RAB31. Interacts with NTRK2; may regulate the ligand specificity of the NTRK2 receptor. Interacts with LINGO1. Interacts with NRADD. Interacts with MAGED1; the interaction antagonizes the association NGFR:NTRK1. Interacts with RTN4R. Interacts (via death domain) with ARHGDIA and RIPK2. Interacts with BFAR. In terms of assembly, (Microbial infection) Binds to rabies virus glycoprotein Gs. N-glycosylated. O-glycosylated. Post-translationally, phosphorylated on serine residues. As to expression, detected in Schwann cells. Detected in embryonic brain, in hippocampus neurons (at protein level). Detected in brain and spinal cord.

Its subcellular location is the cell membrane. The protein localises to the cytoplasm. The protein resides in the perikaryon. It localises to the cell projection. It is found in the growth cone. Its subcellular location is the dendritic spine. Its function is as follows. Low affinity neurotrophin receptor which can bind to mature NGF, BDNF, NTF3, and NTF4. Forms a heterodimeric receptor with SORCS2 that binds the precursor forms of NGF (proNGF), BDNF (proBDNF) and NTF3 (proNT3) with high affinity, and has much lower affinity for mature NGF and BDNF. Plays an important role in differentiation and survival of specific neuronal populations during development. Can mediate cell survival as well as cell death of neural cells. The heterodimeric receptor formed with SORCS2 plays a role in proBDNF-dependent synaptic plasticity, in hippocampal long term depression (LTD) and long term potentiation (LTP). Plays a role in the inactivation of RHOA. Plays a role in the regulation of the translocation of GLUT4 to the cell surface in adipocytes and skeletal muscle cells in response to insulin, probably by regulating RAB31 activity, and thereby contributes to the regulation of insulin-dependent glucose uptake. Necessary for the circadian oscillation of the clock genes BMAL1, PER1, PER2 and NR1D1 in the suprachiasmatic nucleus (SCN) of the brain and in liver and of the genes involved in glucose and lipid metabolism in the liver. (Microbial infection) Cell surface receptor for rabies virus glycoprotein Gs. In terms of biological role, does not bind NGF, BDNF, NTF3, and NTF4. This chain is Tumor necrosis factor receptor superfamily member 16 (Ngfr), found in Mus musculus (Mouse).